We begin with the raw amino-acid sequence, 228 residues long: Urease accessory protein UreF (228 aa).

It belongs to the UreF family. In terms of assembly, ureD, UreF and UreG form a complex that acts as a GTP-hydrolysis-dependent molecular chaperone, activating the urease apoprotein by helping to assemble the nickel containing metallocenter of UreC. The UreE protein probably delivers the nickel.

Its subcellular location is the cytoplasm. Its function is as follows. Required for maturation of urease via the functional incorporation of the urease nickel metallocenter. This Yersinia pseudotuberculosis serotype IB (strain PB1/+) protein is Urease accessory protein UreF.